We begin with the raw amino-acid sequence, 562 residues long: Dihydroxy-acid dehydratase (562 aa).

Aspartate 80 provides a ligand contact to Mg(2+). Residue cysteine 121 participates in [2Fe-2S] cluster binding. Residues aspartate 122 and lysine 123 each contribute to the Mg(2+) site. Position 123 is an N6-carboxylysine (lysine 123). Position 194 (cysteine 194) interacts with [2Fe-2S] cluster. Glutamate 446 is a Mg(2+) binding site. Catalysis depends on serine 472, which acts as the Proton acceptor.

Belongs to the IlvD/Edd family. As to quaternary structure, homodimer. [2Fe-2S] cluster serves as cofactor. The cofactor is Mg(2+).

The catalysed reaction is (2R)-2,3-dihydroxy-3-methylbutanoate = 3-methyl-2-oxobutanoate + H2O. It catalyses the reaction (2R,3R)-2,3-dihydroxy-3-methylpentanoate = (S)-3-methyl-2-oxopentanoate + H2O. The protein operates within amino-acid biosynthesis; L-isoleucine biosynthesis; L-isoleucine from 2-oxobutanoate: step 3/4. It participates in amino-acid biosynthesis; L-valine biosynthesis; L-valine from pyruvate: step 3/4. Functions in the biosynthesis of branched-chain amino acids. Catalyzes the dehydration of (2R,3R)-2,3-dihydroxy-3-methylpentanoate (2,3-dihydroxy-3-methylvalerate) into 2-oxo-3-methylpentanoate (2-oxo-3-methylvalerate) and of (2R)-2,3-dihydroxy-3-methylbutanoate (2,3-dihydroxyisovalerate) into 2-oxo-3-methylbutanoate (2-oxoisovalerate), the penultimate precursor to L-isoleucine and L-valine, respectively. This Staphylococcus aureus (strain MRSA252) protein is Dihydroxy-acid dehydratase.